Consider the following 127-residue polypeptide: MORF4 family-associated protein 1 (127 aa).

Positions 76–97 (ESALNHLQNPDDGAEGRGTKRC) are disordered. A coiled-coil region spans residues 92-126 (RGTKRCEKAEEKAKEIAKMAEMLVELVRRIEKSES).

Belongs to the MORF4 family-associated protein family. As to quaternary structure, found in a complex composed of MORF4L1, MRFAP1 and RB1. Interacts via its N-terminus with MORF4L1. Interacts with CSTB and MORF4L2.

The protein resides in the nucleus. It localises to the cytoplasm. Its subcellular location is the perinuclear region. This chain is MORF4 family-associated protein 1, found in Bos taurus (Bovine).